Consider the following 200-residue polypeptide: MSRILVLYHSLWGHVEQMAEAEAEGARSVSGIQVDVRRVPETMPAETLAAVHAKTHQAAPEAHPDDLANYDGIIFGTPTRFGNMTGQMRNFLDRTGNLWQEGRLVGKVGSVFVSTATQHGGQETTLTSFHTFLFHQGMLVVGVPYSCTELMNMDEISGGTPYGASTMSKGDGSRQPSANELTIARFQGRHVAEITRKLFG.

One can recognise a Flavodoxin-like domain in the interval 4–191; the sequence is ILVLYHSLWG…TIARFQGRHV (188 aa). FMN contacts are provided by residues 10-15 and 79-81; these read SLWGHV and TRF. Trp-12 contacts NAD(+). Substrate is bound at residue Trp-99. FMN is bound by residues 114–120 and His-135; that span reads STATQHG.

The protein belongs to the WrbA family. FMN is required as a cofactor.

It catalyses the reaction a quinone + NADH + H(+) = a quinol + NAD(+). It carries out the reaction a quinone + NADPH + H(+) = a quinol + NADP(+). The sequence is that of NAD(P)H dehydrogenase (quinone) from Acidithiobacillus ferrooxidans (strain ATCC 53993 / BNL-5-31) (Leptospirillum ferrooxidans (ATCC 53993)).